A 513-amino-acid polypeptide reads, in one-letter code: Maturase K (513 aa).

Belongs to the intron maturase 2 family. MatK subfamily.

The protein localises to the plastid. It localises to the chloroplast. Functionally, usually encoded in the trnK tRNA gene intron. Probably assists in splicing its own and other chloroplast group II introns. In Panicum capillare (Witchgrass), this protein is Maturase K.